The sequence spans 191 residues: Auxin-responsive protein IAA32 (191 aa).

Positions 32-36 (LGLSL) match the EAR-like (transcriptional repression) motif. The region spanning 98–184 (YAYVKVNLDG…SVDRMRIARR (87 aa)) is the PB1 domain.

The protein belongs to the Aux/IAA family. Homodimers and heterodimers.

It is found in the nucleus. Its function is as follows. Aux/IAA proteins are short-lived transcriptional factors that function as repressors of early auxin response genes at low auxin concentrations. Repression is thought to result from the interaction with auxin response factors (ARFs), proteins that bind to the auxin-responsive promoter element (AuxRE). Formation of heterodimers with ARF proteins may alter their ability to modulate early auxin response genes expression. This chain is Auxin-responsive protein IAA32, found in Arabidopsis thaliana (Mouse-ear cress).